Here is a 440-residue protein sequence, read N- to C-terminus: IAA-amino acid hydrolase ILR1-like 4 (440 aa).

The N-terminal stretch at 1–23 (MSFFKWVSFVLILHLLNPTLISC) is a signal peptide. The Mn(2+) site is built by cysteine 134, histidine 136, glutamate 170, histidine 194, and histidine 397. The short motif at 437–440 (KDEL) is the Prevents secretion from ER element.

Belongs to the peptidase M20 family. The cofactor is Mn(2+). As to expression, expressed in leaves, stems, roots, siliques and flowers. Detected in the vascular tissue of cotyledons and roots, in adult leaves, stems, siliques, petals, hydathodes and in silique abscission zones and funicles.

It is found in the endoplasmic reticulum lumen. The catalysed reaction is a jasmonyl-L-amino acid + H2O = a jasmonate + an L-alpha-amino acid. In terms of biological role, hydrolyzes certain amino acid conjugates of the plant growth regulator indole-3-acetic acid (IAA), including IAA-Ala, IAA-Asn, IAA-Cys, IAA-Glu, IAA-Met, IAA-Ser and IAA-Gly. Has a lower efficiency with IAA-Phe, IAA-Leu and IAA-Val and no activity with IAA-Ile. Important for IAA-Leu hydrolysis in roots. Also hydrolyzes amino acid conjugates of jasmonic acid and 12-hydroxy jasmonic acid. The chain is IAA-amino acid hydrolase ILR1-like 4 from Arabidopsis thaliana (Mouse-ear cress).